A 445-amino-acid polypeptide reads, in one-letter code: E3 ubiquitin-protein ligase MYLIP (445 aa).

Residues 1 to 279 (MLCYVTRPDA…ETHAFYRCDT (279 aa)) form the FERM domain. The Fe cation site is built by C360, C363, and C368. The segment at 387-422 (CMVCCEEEINSTFCPCGHTVCCESCAAQLQSCPVCR) adopts an RING-type zinc-finger fold. The segment at 431 to 433 (VYL) is critical for homodimerization.

In terms of assembly, homodimer. Interacts with the E2 ubiquitin-conjugating enzyme, UBE2D1 (via RING-type zinc finger). Interacts with myosin regulatory light chain (MRLC) and TMEM4. Autoubiquitinated. Ubiquitously expressed.

It is found in the cytoplasm. It localises to the cell membrane. It carries out the reaction S-ubiquitinyl-[E2 ubiquitin-conjugating enzyme]-L-cysteine + [acceptor protein]-L-lysine = [E2 ubiquitin-conjugating enzyme]-L-cysteine + N(6)-ubiquitinyl-[acceptor protein]-L-lysine.. It participates in protein modification; protein ubiquitination. Can bind 1 iron ion per dimer. Iron binding seems to decrease LDLR degradation activity. Functionally, E3 ubiquitin-protein ligase that mediates ubiquitination and subsequent proteasomal degradation of myosin regulatory light chain (MRLC), LDLR, VLDLR and LRP8. Activity depends on E2 enzymes of the UBE2D family. Proteasomal degradation of MRLC leads to inhibit neurite outgrowth in presence of NGF by counteracting the stabilization of MRLC by saposin-like protein (CNPY2/MSAP) and reducing CNPY2-stimulated neurite outgrowth. Acts as a sterol-dependent inhibitor of cellular cholesterol uptake by mediating ubiquitination and subsequent degradation of LDLR. This chain is E3 ubiquitin-protein ligase MYLIP (MYLIP), found in Homo sapiens (Human).